We begin with the raw amino-acid sequence, 271 residues long: uncharacterized protein (271 aa).

This is an uncharacterized protein from Azospirillum brasilense.